We begin with the raw amino-acid sequence, 483 residues long: Low-density lipoprotein receptor-related protein 11 (483 aa).

The signal sequence occupies residues 1-32; that stretch reads MATRGGGPGPGFRHRALRGLLLLCLWLPGSRP. At 33–433 the chain is on the extracellular side; that stretch reads GEPAAPSSGV…GGEHPAPEAG (401 aa). One can recognise an MANSC domain in the interval 85-172; the sequence is AVPDTIIRTQ…FAPLRGYRTY (88 aa). N-linked (GlcNAc...) asparagine glycosylation is found at asparagine 152 and asparagine 275. In terms of domain architecture, PKD spans 193 to 287; it reads PVSKAGKDVV…VTVLPRPYST (95 aa). An LDL-receptor class A domain is found at 293-329; the sequence is ACSRYHFFCDSGCCIDIALACDGVRQCPDGSDEDFCQ. 3 cysteine pairs are disulfide-bonded: cysteine 294-cysteine 306, cysteine 301-cysteine 319, and cysteine 313-cysteine 328. The tract at residues 346-428 is disordered; it reads AQPGAMGLNE…KSGQAGGEHP (83 aa). Polar residues-rich tracts occupy residues 367-376 and 385-407; these read RATTHNQPAT and HSTQKAPESQINPVQPDSNSSGK. N-linked (GlcNAc...) asparagine glycosylation occurs at asparagine 403. The span at 408–418 shows a compositional bias: basic and acidic residues; that stretch reads NQEEGNYDLKS. A helical transmembrane segment spans residues 434–456; that stretch reads AVLPLALGLAITVLLLLMVTCRL. The Cytoplasmic segment spans residues 457 to 483; that stretch reads RLVKQKLKKARPITSEESDYLINGMYL. Residue serine 474 is modified to Phosphoserine.

This sequence belongs to the LDLR family.

The protein resides in the membrane. The sequence is that of Low-density lipoprotein receptor-related protein 11 (Lrp11) from Mus musculus (Mouse).